A 638-amino-acid chain; its full sequence is MRDSKDALDDKSGSFTSLLPPFGKQRGTSPNDAIPIKSPLERLANSVTSPEKPTVRTAIQKDSPRRKQIDDDQTPPKHLKRSFQNVTVVSPRKKKTIDVVELPFTKGGYGGFYDPRPGCLKFTTHEINVSYTDTSIPVIHIPVQLLKRCCWLQGWRDNLVESPVHAIHLTLKNRDMKRITIGDSASLLFLYNPLHVESARAGLDLLDQSDFSLTSPSSAKEFKQLLTLKQSTIIPRTPQKTVRSIVKQTSSPHSSKMPKHSLPSSPTPFNSNSGDSLLSRIKNSNQSSSERPTANNGAQEQNQSSSSAGNTSNDFSTLCSQGSDKTLLSDASCTTILVYPFSGTNSIAITNTDLTRLNEGEFLNDTIVDFYLRYLYCKLQTQNPSLANDTHIFNTFFYNRLTSKDKDGKRLGHRGVRKWTQKVDLFHKKYIIVPINETFHWYLAIICNIDRLMPVDTKLEEQDEIVMSSVEQPSASKTRQAELTSNSPAILIFDSLANLHKGALNYLREYLLEEAFERKNVHLKSTDIRGFHAKVPQQSNFSDCGIYALHFVELFLETPEQVIANTLDKSLRRTDAKNFDQQWNLQKINTMRCDLKGLIRRLSTEWSSNNERQSLSSGSNDEEDKENDDDLAILPITN.

The segment covering 1 to 12 (MRDSKDALDDKS) has biased composition (basic and acidic residues). Disordered stretches follow at residues 1–79 (MRDS…PKHL) and 238–314 (PQKT…TSND). The span at 238 to 249 (PQKTVRSIVKQT) shows a compositional bias: polar residues. Over residues 250-264 (SSPHSSKMPKHSLPS) the composition is skewed to low complexity. Polar residues predominate over residues 267–314 (TPFNSNSGDSLLSRIKNSNQSSSERPTANNGAQEQNQSSSSAGNTSND). Active-site residues include H440 and D494. T526 is modified (phosphothreonine). Residue C544 is part of the active site. Polar residues predominate over residues 610-619 (NERQSLSSGS). Positions 610-638 (NERQSLSSGSNDEEDKENDDDLAILPITN) are disordered. A compositionally biased stretch (acidic residues) spans 620–631 (NDEEDKENDDDL).

It belongs to the peptidase C48 family.

The protein localises to the nucleus. The sequence is that of Ubiquitin-like-specific protease 2 (ulp2) from Schizosaccharomyces pombe (strain 972 / ATCC 24843) (Fission yeast).